The following is an 84-amino-acid chain: Molybdopterin synthase sulfur carrier subunit (84 aa).

G84 bears the 1-thioglycine; alternate mark. Position 84 is a glycyl adenylate; alternate (G84).

Belongs to the MoaD family. MOCS2A subfamily. In terms of assembly, heterotetramer; composed of 2 small (MOCS2A) and 2 large (MOCS2B) subunits. In terms of processing, C-terminal thiocarboxylation occurs in 2 steps, it is first acyl-adenylated (-COAMP) via the hesA/moeB/thiF part of MOCS3, then thiocarboxylated (-COSH) via the rhodanese domain of MOCS3.

It localises to the cytoplasm. It functions in the pathway cofactor biosynthesis; molybdopterin biosynthesis. Its function is as follows. Acts as a sulfur carrier required for molybdopterin biosynthesis. Component of the molybdopterin synthase complex that catalyzes the conversion of precursor Z into molybdopterin by mediating the incorporation of 2 sulfur atoms into precursor Z to generate a dithiolene group. In the complex, serves as sulfur donor by being thiocarboxylated (-COSH) at its C-terminus by MOCS3. After interaction with MOCS2B, the sulfur is then transferred to precursor Z to form molybdopterin. This Caenorhabditis briggsae protein is Molybdopterin synthase sulfur carrier subunit.